We begin with the raw amino-acid sequence, 778 residues long: Dolichyl-phosphate-mannose--protein mannosyltransferase 4 (778 aa).

Residues 1 to 28 (MASKSEKAVKKAQKLSKEPSVELTDTKS) are compositionally biased toward basic and acidic residues. The tract at residues 1 to 44 (MASKSEKAVKKAQKLSKEPSVELTDTKSSDNVTPKQKSPNSTEE) is disordered. Residues 29-41 (SDNVTPKQKSPNS) are compositionally biased toward polar residues. N-linked (GlcNAc...) asparagine glycosylation occurs at N40. 7 consecutive transmembrane segments (helical) span residues 60–80 (LAFV…LNLP), 103–123 (FFDL…KLAG), 145–165 (VTIR…VFLI), 196–216 (ILLD…YVRF), 223–243 (PFSR…SCTI), 248–268 (VGFF…WYLW), and 288–308 (FCLI…HFNI). N335 is a glycosylation site (N-linked (GlcNAc...) asparagine). 3 consecutive MIR domains span residues 336–396 (STIL…ILPA), 408–467 (NVPV…VVMS), and 474–529 (RPLY…FDDI). Transmembrane regions (helical) follow at residues 608–628 (WWII…EILL), 644–664 (FYRS…PFFI), 669–689 (LFLH…GAFI), and 726–746 (VIEL…FTFF).

Belongs to the glycosyltransferase 39 family.

Its subcellular location is the endoplasmic reticulum membrane. It catalyses the reaction a di-trans,poly-cis-dolichyl beta-D-mannosyl phosphate + L-seryl-[protein] = 3-O-(alpha-D-mannosyl)-L-seryl-[protein] + a di-trans,poly-cis-dolichyl phosphate + H(+). The enzyme catalyses a di-trans,poly-cis-dolichyl beta-D-mannosyl phosphate + L-threonyl-[protein] = 3-O-(alpha-D-mannosyl)-L-threonyl-[protein] + a di-trans,poly-cis-dolichyl phosphate + H(+). It participates in protein modification; protein glycosylation. Its function is as follows. Transfers mannose from Dol-P-mannose to Ser or Thr residues on proteins. Required for normal cell wall and septum formation. The sequence is that of Dolichyl-phosphate-mannose--protein mannosyltransferase 4 (ogm4) from Schizosaccharomyces pombe (strain 972 / ATCC 24843) (Fission yeast).